Reading from the N-terminus, the 155-residue chain is 2-C-methyl-D-erythritol 2,4-cyclodiphosphate synthase (155 aa).

Residues aspartate 10, histidine 12, and histidine 46 each contribute to the a divalent metal cation site. 10–12 provides a ligand contact to 4-CDP-2-C-methyl-D-erythritol 2-phosphate; that stretch reads DSH. 4-CDP-2-C-methyl-D-erythritol 2-phosphate contacts are provided by residues 60-62, 65-69, and lysine 140; these read DIG and FDEND.

This sequence belongs to the IspF family. Homotrimer. A divalent metal cation is required as a cofactor.

The catalysed reaction is 4-CDP-2-C-methyl-D-erythritol 2-phosphate = 2-C-methyl-D-erythritol 2,4-cyclic diphosphate + CMP. It functions in the pathway isoprenoid biosynthesis; isopentenyl diphosphate biosynthesis via DXP pathway; isopentenyl diphosphate from 1-deoxy-D-xylulose 5-phosphate: step 4/6. Involved in the biosynthesis of isopentenyl diphosphate (IPP) and dimethylallyl diphosphate (DMAPP), two major building blocks of isoprenoid compounds. Catalyzes the conversion of 4-diphosphocytidyl-2-C-methyl-D-erythritol 2-phosphate (CDP-ME2P) to 2-C-methyl-D-erythritol 2,4-cyclodiphosphate (ME-CPP) with a corresponding release of cytidine 5-monophosphate (CMP). This chain is 2-C-methyl-D-erythritol 2,4-cyclodiphosphate synthase, found in Mycoplasmoides gallisepticum (strain R(low / passage 15 / clone 2)) (Mycoplasma gallisepticum).